Consider the following 406-residue polypeptide: Phosphopentomutase (406 aa).

Mn(2+) is bound by residues aspartate 10, aspartate 305, histidine 310, aspartate 346, histidine 347, and histidine 358.

The protein belongs to the phosphopentomutase family. It depends on Mn(2+) as a cofactor.

It is found in the cytoplasm. The catalysed reaction is 2-deoxy-alpha-D-ribose 1-phosphate = 2-deoxy-D-ribose 5-phosphate. The enzyme catalyses alpha-D-ribose 1-phosphate = D-ribose 5-phosphate. The protein operates within carbohydrate degradation; 2-deoxy-D-ribose 1-phosphate degradation; D-glyceraldehyde 3-phosphate and acetaldehyde from 2-deoxy-alpha-D-ribose 1-phosphate: step 1/2. In terms of biological role, isomerase that catalyzes the conversion of deoxy-ribose 1-phosphate (dRib-1-P) and ribose 1-phosphate (Rib-1-P) to deoxy-ribose 5-phosphate (dRib-5-P) and ribose 5-phosphate (Rib-5-P), respectively. The polypeptide is Phosphopentomutase (Methylorubrum extorquens (strain PA1) (Methylobacterium extorquens)).